Consider the following 274-residue polypeptide: CDC48-associated ubiquitin-like/zinc finger protein 1 (274 aa).

Residues Leu-12 to Glu-58 form an AN1-type zinc finger. Zn(2+) contacts are provided by Cys-18, Cys-21, Cys-31, Cys-34, Cys-39, His-42, His-48, and Cys-50. The ubiquitin-like stretch occupies residues Asn-170 to His-266. A Phosphoserine modification is found at Ser-273.

Interacts (via its ubiquitin-like domain) with CDC48 (via N-terminus). Associates with the 26S proteasome. Specifically interacts with the regulatory particle (RP) subunit RPN2. Exposure to arsenite, a known inducer of protein misfolding resulting in accumulation of polyubiquitinated conjugates, enhances the association with the proteoasome. Binds to ubiquitinated proteins conjugated to a 4 or more molecule ubiquitin chain. Binding to ubiquitinated proteins is zinc-dependent.

The protein localises to the cytoplasm. It localises to the nucleus. Its function is as follows. Promotes efficient arsenite-induced clearance of stress granules (SGs). May have a role in the ubiquitin-proteasome system (UPS) protecting cells from metalloid-induced proteotoxicity. This Saccharomyces cerevisiae (strain ATCC 204508 / S288c) (Baker's yeast) protein is CDC48-associated ubiquitin-like/zinc finger protein 1.